The chain runs to 106 residues: Putative double-stranded DNA mimic protein PM0536 (106 aa).

It belongs to the putative dsDNA mimic protein family.

Functionally, may act as a double-stranded DNA (dsDNA) mimic. Probably regulates the activity of a dsDNA-binding protein. The sequence is that of Putative double-stranded DNA mimic protein PM0536 from Pasteurella multocida (strain Pm70).